The sequence spans 386 residues: WD repeat-containing protein 89 (386 aa).

WD repeat units lie at residues 21–65 (KEPT…LLRE), 68–107 (GSPGLLNGVRFANSCDNVYSASTDGTVKCWDARLASEKPA), 112–156 (GYPS…QDLS), 167–207 (THSD…EEDA), 213–253 (NSVS…TDEP), and 318–357 (GHAATVRSFCWTVSEDSLLTGGEDAQLLLWKPGAVEKTFT).

The chain is WD repeat-containing protein 89 (Wdr89) from Rattus norvegicus (Rat).